The chain runs to 411 residues: Snake venom metalloproteinase ACLF (411 aa).

Positions 1–20 (MIQVLLVTLCLAAFPYQGSS) are cleaved as a signal peptide. Positions 21–189 (IILESGNVND…KKAFQLNLTP (169 aa)) are excised as a propeptide. Residues 197–393 (RYVELVIVAD…NNPQCILNKP (197 aa)) form the Peptidase M12B domain. The Ca(2+) site is built by Glu-200 and Asp-284. Intrachain disulfides connect Cys-308–Cys-388, Cys-348–Cys-372, and Cys-350–Cys-355. His-333 is a Zn(2+) binding site. The active site involves Glu-334. Zn(2+)-binding residues include His-337 and His-343. The Ca(2+) site is built by Cys-388, Asn-391, Val-403, Asn-406, Leu-408, and Glu-410.

The protein belongs to the venom metalloproteinase (M12B) family. P-I subfamily. In terms of assembly, monomer. It depends on Zn(2+) as a cofactor. In terms of tissue distribution, expressed by the venom gland.

It localises to the secreted. With respect to regulation, inhibited by EDTA and 1,10-phenanthroline, but not by PMSF. Functionally, snake venom zinc metalloprotease that has fibrinolytic activity. The recombinant enzyme cleaves both alpha- and beta-chains of fibrinogen, but not the gamma-chain. The recombinant protein does not produce hemorrhage in mice. Cleaves the peptide substrate Abz-LVEALYQ-EDDnp at the Ala-Leu bond in vitro. The chain is Snake venom metalloproteinase ACLF (ACLPREF) from Agkistrodon contortrix laticinctus (Broad-banded copperhead).